The following is a 63-amino-acid chain: MKAQELREKSVEELNTELLNLLREQFNLRMQAASGQLQQTHLSKQVRRNIARVKTLLTEKAGA.

The protein belongs to the universal ribosomal protein uL29 family.

This chain is Large ribosomal subunit protein uL29, found in Yersinia enterocolitica serotype O:8 / biotype 1B (strain NCTC 13174 / 8081).